Here is an 872-residue protein sequence, read N- to C-terminus: Alanine--tRNA ligase (872 aa).

Zn(2+)-binding residues include histidine 567, histidine 571, cysteine 669, and histidine 673.

This sequence belongs to the class-II aminoacyl-tRNA synthetase family. Zn(2+) is required as a cofactor.

The protein resides in the cytoplasm. It carries out the reaction tRNA(Ala) + L-alanine + ATP = L-alanyl-tRNA(Ala) + AMP + diphosphate. Catalyzes the attachment of alanine to tRNA(Ala) in a two-step reaction: alanine is first activated by ATP to form Ala-AMP and then transferred to the acceptor end of tRNA(Ala). Also edits incorrectly charged Ser-tRNA(Ala) and Gly-tRNA(Ala) via its editing domain. The polypeptide is Alanine--tRNA ligase (Streptococcus pyogenes serotype M2 (strain MGAS10270)).